A 630-amino-acid chain; its full sequence is DNA mismatch repair protein MutL (630 aa).

Positions 398–408 are enriched in polar residues; sequence TQTNAFGSMAT. The tract at residues 398–425 is disordered; the sequence is TQTNAFGSMATSRDSSRGSYSASESRQR.

It belongs to the DNA mismatch repair MutL/HexB family.

In terms of biological role, this protein is involved in the repair of mismatches in DNA. It is required for dam-dependent methyl-directed DNA mismatch repair. May act as a 'molecular matchmaker', a protein that promotes the formation of a stable complex between two or more DNA-binding proteins in an ATP-dependent manner without itself being part of a final effector complex. This is DNA mismatch repair protein MutL from Shewanella baltica (strain OS185).